The primary structure comprises 566 residues: Glucose starvation modulator protein 1 (566 aa).

The segment at residues 20–48 (CVFCHQKHLQCSNERPCKNCVKRNIAHGC) is a DNA-binding region (zn(2)-C6 fungal-type). Disordered stretches follow at residues 63–92 (GVPGAVSNKQSTPRKKLKTSPVSTSVSPMD) and 250–270 (KQASPSPSNTSTSENNTNTLS). Positions 253–270 (SPSPSNTSTSENNTNTLS) are enriched in low complexity.

The protein belongs to the ERT1/acuK family.

The protein localises to the nucleus. In terms of biological role, transcription factor which regulates nonfermentable carbon utilization. The sequence is that of Glucose starvation modulator protein 1 (GSM1) from Candida albicans (strain WO-1) (Yeast).